A 478-amino-acid chain; its full sequence is Probable cytosolic Fe-S cluster assembly factor CPIJ010948 (478 aa).

Positions 23, 69, 72, 75, 189, 245, 396, and 400 each coordinate [4Fe-4S] cluster.

The protein belongs to the NARF family.

In terms of biological role, component of the cytosolic iron-sulfur (Fe/S) protein assembly machinery. Required for maturation of extramitochondrial Fe/S proteins. This Culex quinquefasciatus (Southern house mosquito) protein is Probable cytosolic Fe-S cluster assembly factor CPIJ010948.